We begin with the raw amino-acid sequence, 377 residues long: Nucleosome assembly protein 1;3 (377 aa).

Residues 26 to 80 adopt a coiled-coil conformation; it reads VNVLKNKLQGLTGKHSNVLENLSPNVRKRVEVLREIQTQHDELEAKFFEERAALE. Positions 47–62 match the Nuclear export signal motif; that stretch reads LSPNVRKRVEVLREIQ. Positions 223–228 match the Nuclear localization signal motif; it reads KKKPKK. The segment at 298-377 is disordered; the sequence is EAAQDEDYID…GERPPECKQQ (80 aa). Residues 300-341 show a composition bias toward acidic residues; that stretch reads AQDEDYIDLEDDEDEEDDEDEDEDEEDEEEEDEDEDDDDEDE. The segment covering 345–357 has biased composition (basic residues); that stretch reads KTKKKSSAGRKRS. At cysteine 374 the chain carries Cysteine methyl ester. Cysteine 374 is lipidated: S-farnesyl cysteine. Residues 375 to 377 constitute a propeptide, removed in mature form; sequence KQQ.

The protein belongs to the nucleosome assembly protein (NAP) family. In terms of assembly, can form homomeric and heteromeric protein complexes with NAP1;4. Binds histones H2A and H2B in vivo. Also able to bind histones H1 and H4 in vitro. Interacts with CYCB1;1 and with alpha tubulin.

It localises to the nucleus. Its subcellular location is the cytoplasm. May modulate chromatin structure by regulation of nucleosome assembly/disassembly. Could function together with B-type cyclins in the regulation of microtubule dynamics. This chain is Nucleosome assembly protein 1;3 (NAP1;3), found in Nicotiana tabacum (Common tobacco).